A 969-amino-acid chain; its full sequence is RNA polymerase-associated protein RapA (969 aa).

The region spanning 164-334 is the Helicase ATP-binding domain; it reads EVGRRHAPRV…FARLRLLDAD (171 aa). ATP is bound at residue 177-184; it reads DEVGLGKT. The DEAH box signature appears at 280–283; that stretch reads DEAH. The Helicase C-terminal domain maps to 492–646; it reads RVNWLLEKVK…TCPTGRAVYD (155 aa).

Belongs to the SNF2/RAD54 helicase family. RapA subfamily. In terms of assembly, interacts with the RNAP. Has a higher affinity for the core RNAP than for the holoenzyme. Its ATPase activity is stimulated by binding to RNAP.

In terms of biological role, transcription regulator that activates transcription by stimulating RNA polymerase (RNAP) recycling in case of stress conditions such as supercoiled DNA or high salt concentrations. Probably acts by releasing the RNAP, when it is trapped or immobilized on tightly supercoiled DNA. Does not activate transcription on linear DNA. Probably not involved in DNA repair. The protein is RNA polymerase-associated protein RapA of Vibrio cholerae serotype O1 (strain ATCC 39315 / El Tor Inaba N16961).